We begin with the raw amino-acid sequence, 246 residues long: Isoamyl acetate-hydrolyzing esterase (246 aa).

Ser46 functions as the Nucleophile in the catalytic mechanism. Asp201 acts as the Proton donor in catalysis. The Proton acceptor role is filled by His204.

It belongs to the 'GDSL' lipolytic enzyme family. IAH1 subfamily.

Its subcellular location is the cytoplasm. The enzyme catalyses 3-methylbutyl acetate + H2O = 3-methylbutanol + acetate + H(+). This Schizosaccharomyces pombe (strain 972 / ATCC 24843) (Fission yeast) protein is Isoamyl acetate-hydrolyzing esterase (iah1).